The following is a 725-amino-acid chain: A-agglutinin anchorage subunit (725 aa).

The signal sequence occupies residues methionine 1–alanine 24. 19 tandem repeats follow at residues valine 53 to threonine 149, threonine 182 to serine 188, threonine 189 to serine 195, threonine 196 to serine 202, threonine 203 to serine 209, threonine 210 to serine 216, threonine 217 to serine 223, threonine 224 to serine 230, threonine 231 to leucine 237, threonine 238 to serine 244, threonine 245 to serine 251, threonine 252 to serine 258, threonine 259 to serine 265, threonine 266 to serine 272, threonine 273 to serine 279, lysine 280 to serine 286, threonine 287 to serine 293, threonine 294 to leucine 300, and threonine 301 to leucine 307. The interval valine 53–threonine 493 is 2 X approximate repeats. 2 disordered regions span residues proline 168–serine 318 and serine 335–methionine 363. An 18 X approximate tandem repeats, Ser/Thr-rich region spans residues threonine 182–leucine 307. The stretch at methionine 395–threonine 493 is one 1-2 repeat. The GPI-anchor amidated glycine moiety is linked to residue glycine 699. A propeptide spans serine 700–serine 725 (removed in mature form).

As to quaternary structure, heterodimer; disulfide-linked. Extensively O-glycosylated by PMT1 and PMT2. In terms of processing, the GPI-anchor is attached to the protein in the endoplasmic reticulum and serves to target the protein to the cell surface. There, the glucosamine-inositol phospholipid moiety is cleaved off and the GPI-modified mannoprotein is covalently attached via its lipidless GPI glycan remnant to the 1,6-beta-glucan of the outer cell wall layer.

It is found in the secreted. The protein localises to the cell wall. Its subcellular location is the membrane. Its function is as follows. Cell wall anchoring subunit of the a-agglutinin heterodimer. S.cerevisiae a and alpha cells express the complementary cell surface glycoproteins a-agglutinin and alpha-agglutinin, respectively, which interact with one another to promote cellular aggregation during mating. This is A-agglutinin anchorage subunit (AGA1) from Saccharomyces cerevisiae (strain ATCC 204508 / S288c) (Baker's yeast).